A 494-amino-acid polypeptide reads, in one-letter code: NAD(P)H-quinone oxidoreductase subunit 2 B, chloroplastic (494 aa).

14 consecutive transmembrane segments (helical) span residues 13–33 (SILPECILILSLIVTIIIDLI), 39–59 (TPWLYLVSLTALVTSVVILLF), 81–101 (IFRLFILICSLLCIPLSIDYI), 107–127 (ALTEFLLFILTATLGGMFLCC), 131–151 (LVTIFVALECLGLSSYLLSGY), 166–186 (LLMGGASSSILVYGFSLLYGL), 211–231 (MFISMIFLLVGVGFKLSLVPF), 243–263 (PTPVVAFFSVTSKVAALALAT), 277–297 (WHLLLEILAISSMILGNFIAV), 305–325 (MLAYSSISQIGYIIIGVIAAE), 336–356 (YMLIYIFMNLGTFACITLFGL), 378–398 (LSLVLCLLSLGGIPPLSGFFG), 411–433 (LYFLVPIALSTSVISMYYYLKII), and 468–488 (MIICVVASTLPGILINPIIAI).

The protein belongs to the complex I subunit 2 family. NDH is composed of at least 16 different subunits, 5 of which are encoded in the nucleus.

It localises to the plastid. It is found in the chloroplast thylakoid membrane. The enzyme catalyses a plastoquinone + NADH + (n+1) H(+)(in) = a plastoquinol + NAD(+) + n H(+)(out). It carries out the reaction a plastoquinone + NADPH + (n+1) H(+)(in) = a plastoquinol + NADP(+) + n H(+)(out). Functionally, NDH shuttles electrons from NAD(P)H:plastoquinone, via FMN and iron-sulfur (Fe-S) centers, to quinones in the photosynthetic chain and possibly in a chloroplast respiratory chain. The immediate electron acceptor for the enzyme in this species is believed to be plastoquinone. Couples the redox reaction to proton translocation, and thus conserves the redox energy in a proton gradient. The polypeptide is NAD(P)H-quinone oxidoreductase subunit 2 B, chloroplastic (Angiopteris evecta (Mule's foot fern)).